A 160-amino-acid polypeptide reads, in one-letter code: Cyclic pyranopterin monophosphate synthase (160 aa).

Substrate is bound by residues 75 to 77 and 113 to 114; these read LCH and ME. The active site involves Asp-128.

It belongs to the MoaC family. In terms of assembly, homohexamer; trimer of dimers.

It catalyses the reaction (8S)-3',8-cyclo-7,8-dihydroguanosine 5'-triphosphate = cyclic pyranopterin phosphate + diphosphate. It functions in the pathway cofactor biosynthesis; molybdopterin biosynthesis. Its function is as follows. Catalyzes the conversion of (8S)-3',8-cyclo-7,8-dihydroguanosine 5'-triphosphate to cyclic pyranopterin monophosphate (cPMP). This Beijerinckia indica subsp. indica (strain ATCC 9039 / DSM 1715 / NCIMB 8712) protein is Cyclic pyranopterin monophosphate synthase.